Here is a 353-residue protein sequence, read N- to C-terminus: Melanin-concentrating hormone receptor 1 (353 aa).

The tract at residues 1-31 is disordered; sequence MDLEASLLPTGPNTSNTSDGPDNLTSAGSPP. Over 1–45 the chain is Extracellular; that stretch reads MDLEASLLPTGPNTSNTSDGPDNLTSAGSPPRSGSVSYINIIMPS. Polar residues predominate over residues 11–31; it reads GPNTSNTSDGPDNLTSAGSPP. 3 N-linked (GlcNAc...) asparagine glycosylation sites follow: asparagine 13, asparagine 16, and asparagine 23. The helical transmembrane segment at 46–66 threads the bilayer; that stretch reads VFGTICLLGIIGNSMVIFAVV. Over 67–79 the chain is Cytoplasmic; the sequence is KKSKLHWCNNVPD. The helical transmembrane segment at 80 to 100 threads the bilayer; the sequence is IFIINLSVVDLLFLLGMPFMI. Residues 101 to 118 lie on the Extracellular side of the membrane; the sequence is HQLMGNGVWHFGETMCTL. Cysteine 116 and cysteine 194 are disulfide-bonded. Residues 119 to 139 form a helical membrane-spanning segment; sequence ITAMDANSQFTSTYILTAMAI. Residues 140–161 lie on the Cytoplasmic side of the membrane; it reads DRYLATVHPISSTKFRKPSVAT. The chain crosses the membrane as a helical span at residues 162 to 182; the sequence is LVICLLWALSFISITPVWLYA. Topologically, residues 183–204 are extracellular; the sequence is RLIPFPGGAVGCGIRLPNPDTD. A helical transmembrane segment spans residues 205-225; the sequence is LYWFTLYQFFLAFALPFVVIT. The Cytoplasmic portion of the chain corresponds to 226 to 257; that stretch reads AAYVRILQRMTSSVAPASQRSIRLRTKRVTRT. Residues 258–278 traverse the membrane as a helical segment; it reads AIAICLVFFVCWAPYYVLQLT. The Extracellular segment spans residues 279-294; it reads QLSISRPTLTFVYLYN. A helical transmembrane segment spans residues 295–315; it reads AAISLGYANSCLNPFVYIVLC. The Cytoplasmic portion of the chain corresponds to 316–353; the sequence is ETFRKRLVLSVKPAAQGQLRAVSNAQTADEERTESKGT.

Belongs to the G-protein coupled receptor 1 family. Interacts with NCDN.

It localises to the cell membrane. In terms of biological role, receptor for melanin-concentrating hormone, coupled to both G proteins that inhibit adenylyl cyclase and G proteins that activate phosphoinositide hydrolysis. The protein is Melanin-concentrating hormone receptor 1 of Macaca mulatta (Rhesus macaque).